The sequence spans 399 residues: Formate-dependent phosphoribosylglycinamide formyltransferase (399 aa).

N(1)-(5-phospho-beta-D-ribosyl)glycinamide-binding positions include 8-9 and glutamate 68; that span reads EL. ATP is bound by residues arginine 100, lysine 141, 146 to 151, 185 to 188, and glutamate 193; these read SSGHGQ and EALA. Positions 105–308 constitute an ATP-grasp domain; sequence VLAHEELGLP…EFALHARAIL (204 aa). 2 residues coordinate Mg(2+): glutamate 266 and glutamate 279. Residues aspartate 286, lysine 361, and 368 to 369 each bind N(1)-(5-phospho-beta-D-ribosyl)glycinamide; that span reads RR.

This sequence belongs to the PurK/PurT family. As to quaternary structure, homodimer.

It catalyses the reaction N(1)-(5-phospho-beta-D-ribosyl)glycinamide + formate + ATP = N(2)-formyl-N(1)-(5-phospho-beta-D-ribosyl)glycinamide + ADP + phosphate + H(+). It participates in purine metabolism; IMP biosynthesis via de novo pathway; N(2)-formyl-N(1)-(5-phospho-D-ribosyl)glycinamide from N(1)-(5-phospho-D-ribosyl)glycinamide (formate route): step 1/1. Functionally, involved in the de novo purine biosynthesis. Catalyzes the transfer of formate to 5-phospho-ribosyl-glycinamide (GAR), producing 5-phospho-ribosyl-N-formylglycinamide (FGAR). Formate is provided by PurU via hydrolysis of 10-formyl-tetrahydrofolate. In Bifidobacterium longum (strain NCC 2705), this protein is Formate-dependent phosphoribosylglycinamide formyltransferase.